A 389-amino-acid chain; its full sequence is Chalcone synthase 2 (389 aa).

Residue Cys164 is part of the active site.

Belongs to the thiolase-like superfamily. Chalcone/stilbene synthases family.

It carries out the reaction (E)-4-coumaroyl-CoA + 3 malonyl-CoA + 3 H(+) = 2',4,4',6'-tetrahydroxychalcone + 3 CO2 + 4 CoA. The protein operates within secondary metabolite biosynthesis; flavonoid biosynthesis. The primary product of this enzyme is 4,2',4',6'-tetrahydroxychalcone (also termed naringenin-chalcone or chalcone) which can under specific conditions spontaneously isomerize into naringenin. In Pisum sativum (Garden pea), this protein is Chalcone synthase 2 (CHS2).